We begin with the raw amino-acid sequence, 573 residues long: Delta 8-(E)-sphingolipid desaturase (573 aa).

The Cytochrome b5 heme-binding domain occupies 2 to 77 (SRVLSRRDIA…FKIWKIGRID (76 aa)). His37 and His60 together coordinate heme. A helical transmembrane segment spans residues 228–248 (LFGISFYLLSLKWFAISAICL). The Histidine box-1 signature appears at 260–264 (HDAGH). A helical membrane pass occupies residues 273–293 (VDNIIGMTVASWIGGLSLGWW). The Histidine box-2 motif lies at 297–301 (HDVHH). 3 helical membrane passes run 353-372 (YLYY…LSWM), 393-413 (LAEL…KQMP), and 422-442 (VMIS…SHFA). Positions 481-485 (QVIHH) match the Histidine box-3 motif.

Belongs to the fatty acid desaturase type 1 family.

The protein localises to the membrane. It catalyses the reaction an N-acylsphing-4-enine + 2 Fe(II)-[cytochrome b5] + O2 + 2 H(+) = a (4E,8E)-4-sphinga-4,8-dienine ceramide + 2 Fe(III)-[cytochrome b5] + 2 H2O. It participates in lipid metabolism; sphingolipid metabolism. In terms of biological role, delta(8)-fatty-acid desaturase which introduces a double bond at the 8-position in the long-chain base (LCB) of ceramides. Required for the formation of the di-unsaturated sphingoid base (E,E)-sphinga-4,8-dienine during glucosylceramide (GluCer) biosynthesis. This Kluyveromyces lactis (Yeast) protein is Delta 8-(E)-sphingolipid desaturase.